The chain runs to 344 residues: MLVLGIESSCDETGLALYDTGAGLLAHALHSQIAMHRDYGGVVPELASRDHIRRVLPLLEQVLADAGRTRQDIDAIAFTQGPGLAGALLVGASVANALGFALNVPMVGVHHLEGHLLSPLLTREPPPFPFVALLVSGGHTQLMEVRGIGDYALLGETLDDAAGEAFDKTAKLLGLGYPGGPEVSRLAEFGVPGAFELPRPMLHSGNLDFSFAGLKTAVLTQTRKLANTCEQDRANLARAFVDAIVDVLVAKSMAALRQTGHKRLVVAGGVGANRQLRERLDQLGRQRKLDVYYPDLAFCTDNGAMIAFAGAMRLQAAPELARREYGYGVTPRWDLADIRLPSAA.

Residues His-111 and His-115 each contribute to the Fe cation site. Residues 134–138 (LVSGG), Asp-167, Gly-180, and Asn-273 contribute to the substrate site. Asp-301 contributes to the Fe cation binding site.

The protein belongs to the KAE1 / TsaD family. The cofactor is Fe(2+).

It is found in the cytoplasm. It carries out the reaction L-threonylcarbamoyladenylate + adenosine(37) in tRNA = N(6)-L-threonylcarbamoyladenosine(37) in tRNA + AMP + H(+). Required for the formation of a threonylcarbamoyl group on adenosine at position 37 (t(6)A37) in tRNAs that read codons beginning with adenine. Is involved in the transfer of the threonylcarbamoyl moiety of threonylcarbamoyl-AMP (TC-AMP) to the N6 group of A37, together with TsaE and TsaB. TsaD likely plays a direct catalytic role in this reaction. The polypeptide is tRNA N6-adenosine threonylcarbamoyltransferase (Cupriavidus taiwanensis (strain DSM 17343 / BCRC 17206 / CCUG 44338 / CIP 107171 / LMG 19424 / R1) (Ralstonia taiwanensis (strain LMG 19424))).